A 615-amino-acid polypeptide reads, in one-letter code: Dihydroxy-acid dehydratase (615 aa).

A Mg(2+)-binding site is contributed by D81. C122 contacts [2Fe-2S] cluster. Mg(2+)-binding residues include D123 and K124. K124 bears the N6-carboxylysine mark. Residue C193 participates in [2Fe-2S] cluster binding. E489 contacts Mg(2+). The active-site Proton acceptor is the S515.

This sequence belongs to the IlvD/Edd family. In terms of assembly, homodimer. It depends on [2Fe-2S] cluster as a cofactor. Mg(2+) is required as a cofactor.

It catalyses the reaction (2R)-2,3-dihydroxy-3-methylbutanoate = 3-methyl-2-oxobutanoate + H2O. It carries out the reaction (2R,3R)-2,3-dihydroxy-3-methylpentanoate = (S)-3-methyl-2-oxopentanoate + H2O. Its pathway is amino-acid biosynthesis; L-isoleucine biosynthesis; L-isoleucine from 2-oxobutanoate: step 3/4. It functions in the pathway amino-acid biosynthesis; L-valine biosynthesis; L-valine from pyruvate: step 3/4. Functions in the biosynthesis of branched-chain amino acids. Catalyzes the dehydration of (2R,3R)-2,3-dihydroxy-3-methylpentanoate (2,3-dihydroxy-3-methylvalerate) into 2-oxo-3-methylpentanoate (2-oxo-3-methylvalerate) and of (2R)-2,3-dihydroxy-3-methylbutanoate (2,3-dihydroxyisovalerate) into 2-oxo-3-methylbutanoate (2-oxoisovalerate), the penultimate precursor to L-isoleucine and L-valine, respectively. The sequence is that of Dihydroxy-acid dehydratase from Pseudomonas savastanoi pv. phaseolicola (strain 1448A / Race 6) (Pseudomonas syringae pv. phaseolicola (strain 1448A / Race 6)).